The following is a 346-amino-acid chain: Acrosin (346 aa).

The signal sequence occupies residues 1–19; it reads MALLLPLAVLLAACRPGHG. Intrachain disulfides connect cysteine 24-cysteine 146, cysteine 27-cysteine 154, cysteine 70-cysteine 86, cysteine 168-cysteine 240, cysteine 203-cysteine 219, and cysteine 230-cysteine 260. The Peptidase S1 domain maps to 41–284; that stretch reads VVGGTEALHG…FYNWILLQVR (244 aa). Histidine 85 serves as the catalytic Charge relay system. A glycan (N-linked (GlcNAc...) asparagine) is linked at asparagine 128. Aspartate 134 (charge relay system) is an active-site residue. A glycan (N-linked (GlcNAc...) asparagine) is linked at asparagine 204. The Charge relay system role is filled by serine 234. A propeptide spanning residues 266–346 is cleaved from the precursor; that stretch reads PGIYTSTQHF…LLQSLWGSKA (81 aa).

The protein belongs to the peptidase S1 family. As to quaternary structure, heavy chain (catalytic) and a light chain linked by two disulfide bonds. In terms of processing, glycosylated.

The catalysed reaction is Preferential cleavage: Arg-|-Xaa, Lys-|-Xaa.. With respect to regulation, inhibited by aprotinin, ovomucoid, soybean trypsin inhibitor, benzamidine, p-aminobenzamidine, and zinc ions. Activity also inhibited by a Kazal-type proteinase inhibitor. Functionally, serine protease of trypsin-like cleavage specificity. Synthesized in a zymogen form, proacrosin and stored in the acrosome. The sequence is that of Acrosin from Meleagris gallopavo (Wild turkey).